The sequence spans 390 residues: tRNA(Met) cytidine acetate ligase (390 aa).

Residues 7-20 (VVEY…HKLH), Gly-101, Asn-162, and Arg-187 each bind ATP.

This sequence belongs to the TmcAL family.

The protein localises to the cytoplasm. The enzyme catalyses cytidine(34) in elongator tRNA(Met) + acetate + ATP = N(4)-acetylcytidine(34) in elongator tRNA(Met) + AMP + diphosphate. Functionally, catalyzes the formation of N(4)-acetylcytidine (ac(4)C) at the wobble position of elongator tRNA(Met), using acetate and ATP as substrates. First activates an acetate ion to form acetyladenylate (Ac-AMP) and then transfers the acetyl group to tRNA to form ac(4)C34. The polypeptide is tRNA(Met) cytidine acetate ligase (Listeria monocytogenes serotype 4a (strain HCC23)).